The following is a 133-amino-acid chain: ATP synthase epsilon chain (133 aa).

The tract at residues 81 to 110 (AAERPEQIDTERARKAKERAEQRLASEHVD) is disordered.

It belongs to the ATPase epsilon chain family. In terms of assembly, F-type ATPases have 2 components, CF(1) - the catalytic core - and CF(0) - the membrane proton channel. CF(1) has five subunits: alpha(3), beta(3), gamma(1), delta(1), epsilon(1). CF(0) has three main subunits: a, b and c.

Its subcellular location is the cell membrane. Its function is as follows. Produces ATP from ADP in the presence of a proton gradient across the membrane. This is ATP synthase epsilon chain from Shouchella clausii (strain KSM-K16) (Alkalihalobacillus clausii).